Consider the following 594-residue polypeptide: DNA ligase (594 aa).

Residues 32–36, 81–82, and glutamate 118 each bind NAD(+); these read DEEYD and SL. Lysine 120 serves as the catalytic N6-AMP-lysine intermediate. Residues arginine 141, glutamate 181, lysine 299, and lysine 323 each coordinate NAD(+). Cysteine 417, cysteine 420, cysteine 436, and cysteine 442 together coordinate Zn(2+).

Belongs to the NAD-dependent DNA ligase family. LigA subfamily. Mg(2+) serves as cofactor. It depends on Mn(2+) as a cofactor.

The catalysed reaction is NAD(+) + (deoxyribonucleotide)n-3'-hydroxyl + 5'-phospho-(deoxyribonucleotide)m = (deoxyribonucleotide)n+m + AMP + beta-nicotinamide D-nucleotide.. In terms of biological role, DNA ligase that catalyzes the formation of phosphodiester linkages between 5'-phosphoryl and 3'-hydroxyl groups in double-stranded DNA using NAD as a coenzyme and as the energy source for the reaction. It is essential for DNA replication and repair of damaged DNA. This chain is DNA ligase, found in Blochmanniella floridana.